Here is a 1160-residue protein sequence, read N- to C-terminus: Nonribosomal peptide synthetase fmqC (1160 aa).

Positions 132–520 (TYRELNDRSS…LGEVEHALQQ (389 aa)) are adenylation. The Carrier domain occupies 642 to 719 (QPVTQLEESL…EMAGMLDGVT (78 aa)). Serine 679 carries the O-(pantetheine 4'-phosphoryl)serine modification. Positions 749–1025 (CTLEDLQEGF…CAAAETPMRI (277 aa)) are condensation.

This sequence belongs to the NRP synthetase family. As to quaternary structure, interacts with the mitogen-activated protein kinase mpkA. Phosphorylated by mpkA during conidiogenesis.

It is found in the cytoplasm. It functions in the pathway alkaloid biosynthesis. Nonribosomal peptide synthetase; part of the gene cluster that mediates the biosynthesis of the antitumor fumiquinazolines that confer a dual-usage capability to defend against phagocytes in the environment and animal hosts. The simplest member is fumiquinazoline F (FQF) with a 6-6-6 tricyclic core derived from anthranilic acid (Ant), tryptophan (Trp), and alanine (Ala). The trimodular NRPS fmqA is responsible for FQF formation. Modules 1, 2 and 3 of fmqA are predicted to activate and load Ant, Trp and Ala, respectively, providing for the assembly of an Ant-Trp-Ala-S-enzyme intermediate that would undergo double cyclization for chain release and generation of the tricyclic 6-6-6 product fumiquinazoline F. The presence of an E domain predicted for module 2 of fmqA is consistent with epimerization of L-Trp to D-Trp during assembly to generate the R-stereocenter at C14 of FQF. The FAD-dependent monooxygenase fmqB and the monomodular NRPS fmqC then maturate FQF to FQA. FmqB oxidizes the 2',3'-double bond of the indole side chain of FQF, and fmqC activates L-Ala as the adenylate, installs it as the pantetheinyl thioester on its carrier protein domain, and acylates the oxidized indole for subsequent intramolecular cyclization to create the 6-5-5-imidazolindolone of FQA. The FAD-linked oxidoreductase fmqD introduces a third layer of scaffold complexity by converting FQA to the spirohemiaminal FQC, presumably by catalyzing the formation of a transient imine within the pyrazinone ring. FQC subsequently converts nonenzymatically to the known cyclic aminal FQD. This Aspergillus fumigatus (strain ATCC MYA-4609 / CBS 101355 / FGSC A1100 / Af293) (Neosartorya fumigata) protein is Nonribosomal peptide synthetase fmqC.